The primary structure comprises 195 residues: Pyridoxal 5'-phosphate synthase subunit PdxT (195 aa).

55–57 contributes to the L-glutamine binding site; that stretch reads GES. The active-site Nucleophile is Cys84. Residues Arg111 and 139–140 contribute to the L-glutamine site; that span reads IR. Catalysis depends on charge relay system residues His175 and Glu177.

This sequence belongs to the glutaminase PdxT/SNO family. As to quaternary structure, in the presence of PdxS, forms a dodecamer of heterodimers. Only shows activity in the heterodimer.

The catalysed reaction is aldehydo-D-ribose 5-phosphate + D-glyceraldehyde 3-phosphate + L-glutamine = pyridoxal 5'-phosphate + L-glutamate + phosphate + 3 H2O + H(+). It catalyses the reaction L-glutamine + H2O = L-glutamate + NH4(+). It participates in cofactor biosynthesis; pyridoxal 5'-phosphate biosynthesis. In terms of biological role, catalyzes the hydrolysis of glutamine to glutamate and ammonia as part of the biosynthesis of pyridoxal 5'-phosphate. The resulting ammonia molecule is channeled to the active site of PdxS. The chain is Pyridoxal 5'-phosphate synthase subunit PdxT from Methanosphaerula palustris (strain ATCC BAA-1556 / DSM 19958 / E1-9c).